A 321-amino-acid polypeptide reads, in one-letter code: uncharacterized protein (321 aa).

It belongs to the carbohydrate kinase PfkB family.

This is an uncharacterized protein from Escherichia coli (strain K12).